A 142-amino-acid chain; its full sequence is Coiled-coil-helix-coiled-coil-helix domain-containing protein 10, mitochondrial (142 aa).

A mitochondrion-targeting transit peptide spans 1-16; the sequence is MPRGSRSAASRPASRP. Over residues 1 to 20 the composition is skewed to low complexity; the sequence is MPRGSRSAASRPASRPAAPS. Disordered regions lie at residues 1–45 and 68–97; these read MPRG…PGLM and ALTGAFSGGSSEPSQPAVQQAPTPAAPQPL. Residues 21–39 show a composition bias toward pro residues; it reads AHPPAHPPPSAAAPAPAPS. A compositionally biased stretch (low complexity) spans 80–90; it reads PSQPAVQQAPT. The 42-residue stretch at 99 to 140 folds into the CHCH domain; it reads MGPCAYEIRQFLDCSTTQSDLSLCEGFSEALKQCKYYHGLSS. Short sequence motifs (cx9C motif) lie at residues 102-112 and 122-132; these read CAYEIRQFLDC and CEGFSEALKQC. Intrachain disulfides connect Cys-102–Cys-132 and Cys-112–Cys-122.

In terms of tissue distribution, ubiquitously expressed. Higher expression is observed in heart and liver.

The protein resides in the mitochondrion intermembrane space. Its function is as follows. May be involved in the maintenance of mitochondrial organization and mitochondrial cristae structure. The polypeptide is Coiled-coil-helix-coiled-coil-helix domain-containing protein 10, mitochondrial (CHCHD10) (Homo sapiens (Human)).